The chain runs to 580 residues: Trafficking protein particle complex subunit 14 (580 aa).

Disordered regions lie at residues G95–G134 and V480–S533. The segment covering P105–F116 has biased composition (gly residues). S491 bears the Phosphoserine mark. The segment covering R492 to R502 has biased composition (low complexity). The segment covering L512–R525 has biased composition (polar residues). A Phosphoserine modification is found at S517. T541 bears the Phosphothreonine mark. Residue S546 is modified to Phosphoserine.

In terms of assembly, component of the multisubunit TRAPP II complex, which includes at least TRAPPC1, TRAPPC2, TRAPPC2L, TRAPPC3, TRAPPC4, TRAPPC5, TRAPPC6A/B, TRAPPC9, TRAPPC10 and TRAPPC14. TRAPPC9, TRAPPC10 and TRAPPC14 are specific subunits of the TRAPP II complex. Interacts with alpha-tubulin during mitosis. Interacts with RAB3IP (via the N-terminal region); this interaction mediates RAB3IP association with the TRAPP II complex. Interacts with TRAPPC10. Interacts with FBF1.

The protein resides in the cytoplasm. The protein localises to the cytoskeleton. Its subcellular location is the spindle. It localises to the vesicle. It is found in the midbody. In terms of biological role, specific subunit of the TRAPP (transport protein particle) II complex, a highly conserved vesicle tethering complex that functions in late Golgi trafficking as a membrane tether. TRAPPC14 is dispensable for TRAPPII complex integrity but mediates RAB3IP preciliary vesicle trafficking to the mother centriole during ciliogenesis. Modulates YAP1 activity as transcriptional regulator. The protein is Trafficking protein particle complex subunit 14 of Mus musculus (Mouse).